The sequence spans 268 residues: Ubiquinone biosynthesis protein COQ4 homolog, mitochondrial (268 aa).

4 residues coordinate Zn(2+): H171, D172, H175, and E187.

It belongs to the COQ4 family. In terms of assembly, component of a multi-subunit COQ enzyme complex. It depends on Zn(2+) as a cofactor.

The protein resides in the mitochondrion inner membrane. The enzyme catalyses a 4-hydroxy-3-methoxy-5-(all-trans-polyprenyl)benzoate + H(+) = a 2-methoxy-6-(all-trans-polyprenyl)phenol + CO2. It participates in cofactor biosynthesis; ubiquinone biosynthesis. Functionally, lyase that catalyzes the C1-decarboxylation of 4-hydroxy-3-methoxy-5-(all-trans-polyprenyl)benzoic acid into 2-methoxy-6-(all-trans-polyprenyl)phenol during ubiquinone biosynthesis. This Drosophila melanogaster (Fruit fly) protein is Ubiquinone biosynthesis protein COQ4 homolog, mitochondrial.